We begin with the raw amino-acid sequence, 203 residues long: Endo-type membrane-bound lytic murein transglycosylase A (203 aa).

Residues 1–15 form the signal peptide; sequence MKLRWFAFLIVLLAG. C16 carries N-palmitoyl cysteine lipidation. The S-diacylglycerol cysteine moiety is linked to residue C16.

It belongs to the transglycosylase Slt family.

The protein localises to the cell outer membrane. The enzyme catalyses Endolytic cleavage of the (1-&gt;4)-beta-glycosidic linkage between N-acetylmuramic acid (MurNAc) and N-acetylglucosamine (GlcNAc) residues in peptidoglycan with concomitant formation of a 1,6-anhydrobond in the MurNAc residue.. Its function is as follows. Murein-degrading enzyme. May play a role in recycling of muropeptides during cell elongation and/or cell division. Preferentially cleaves at a distance of more than two disaccharide units from the ends of the glycan chain. The protein is Endo-type membrane-bound lytic murein transglycosylase A of Escherichia coli O1:K1 / APEC.